The sequence spans 444 residues: UPF0053 protein YhdP (444 aa).

The 201-residue stretch at 1–201 (MDIVNLILVA…YKSGEINQSE (201 aa)) folds into the CNNM transmembrane domain. A run of 3 helical transmembrane segments spans residues 7–27 (ILVAVLIALTAFFVASEFAII), 61–81 (ACQLGITLTSIGLGVLGESTI), and 101–121 (VISFIFAYAIITFLHVVVGEL). CBS domains lie at 220-282 (MIPR…SVDS) and 284-344 (ISQF…IRDE).

This sequence belongs to the UPF0053 family.

The protein localises to the cell membrane. The sequence is that of UPF0053 protein YhdP (yhdP) from Bacillus subtilis (strain 168).